Here is a 229-residue protein sequence, read N- to C-terminus: Deleted in azoospermia-like (229 aa).

One can recognise an RRM domain in the interval 47-128 (NTLFVGGIDM…PAIMKERSSR (82 aa)). In terms of domain architecture, DAZ spans 172–198 (PYSYSSPPGIMVPQVPMNYAQTTYAYQ).

The protein belongs to the RRM DAZ family. Testis and ovary specific. In ovary, it is localized in the cortex of oocytes. At the onset of embryogenesis, maternal product is located at the vegetal pole, before migrating toward blastomeres through cytoplasmic streams as early embryogenesis proceededs.

The protein localises to the cytoplasm. Functionally, RNA-binding protein involved in gametogenesis in both males and females. Acts by binding to the 3'-UTR of mRNA, specifically recognizing GUU triplets, and promoting the translation of key transcripts. Establishes oocyte polarity through interaction with Bucky ball (BUC). Interacts with Bucky ball (BUC) mRNA to mediate Balbiani body formation and oocyte polarity during early oogenesis. The polypeptide is Deleted in azoospermia-like (dazl) (Danio rerio (Zebrafish)).